The sequence spans 665 residues: Soluble lamin-associated protein of 75 kDa (665 aa).

The interval 309–665 (AFASTSEGPE…GPGKKKAKLT (357 aa)) is disordered. Residues 311–326 (ASTSEGPEKTPVSTRT) show a composition bias toward polar residues. A compositionally biased stretch (basic residues) spans 327–338 (RSSHLKRPKIGK). 2 positions are modified to phosphoserine: S348 and S377. Residues 376 to 397 (SSEEFLEEEPEQGVIDFEDESG) show a composition bias toward acidic residues. Residues 412 to 421 (QKQDGDKDSA) show a composition bias toward basic and acidic residues. The segment covering 440–451 (TEDEDSTSEGLE) has biased composition (acidic residues). Phosphoserine occurs at positions 447 and 512. Polar residues-rich tracts occupy residues 521–533 (LGSS…VSNI) and 553–566 (VSQN…SSVE). Residues S610, S613, and S630 each carry the phosphoserine modification. Over residues 646–665 (NLRRKAKGHKGPGKKKAKLT) the composition is skewed to basic residues.

This sequence belongs to the FAM169 family.

It localises to the nucleus envelope. The protein localises to the nucleus inner membrane. The sequence is that of Soluble lamin-associated protein of 75 kDa (Fam169a) from Mus musculus (Mouse).